The primary structure comprises 264 residues: Undecaprenyl-diphosphatase (264 aa).

A run of 7 helical transmembrane segments spans residues R38–F58, R75–V95, V106–Y126, V136–G156, F181–M201, V217–I237, and F242–S262.

It belongs to the UppP family.

The protein resides in the cell membrane. It catalyses the reaction di-trans,octa-cis-undecaprenyl diphosphate + H2O = di-trans,octa-cis-undecaprenyl phosphate + phosphate + H(+). In terms of biological role, catalyzes the dephosphorylation of undecaprenyl diphosphate (UPP). Confers resistance to bacitracin. In Stenotrophomonas maltophilia (strain K279a), this protein is Undecaprenyl-diphosphatase.